The following is a 742-amino-acid chain: Phosphoribosylformylglycinamidine synthase subunit PurL (742 aa).

His50 is a catalytic residue. ATP is bound by residues Tyr53 and Lys92. Glu94 contacts Mg(2+). Substrate is bound by residues Ser95–His98 and Arg117. Residue His96 is the Proton acceptor of the active site. Residue Asp118 participates in Mg(2+) binding. Gln241 contacts substrate. Residue Asp269 coordinates Mg(2+). Glu313–Gln315 contributes to the substrate binding site. Asp494 and Gly531 together coordinate ATP. Residue Asn532 participates in Mg(2+) binding. Residue Ser534 participates in substrate binding.

This sequence belongs to the FGAMS family. In terms of assembly, monomer. Part of the FGAM synthase complex composed of 1 PurL, 1 PurQ and 2 PurS subunits.

Its subcellular location is the cytoplasm. The enzyme catalyses N(2)-formyl-N(1)-(5-phospho-beta-D-ribosyl)glycinamide + L-glutamine + ATP + H2O = 2-formamido-N(1)-(5-O-phospho-beta-D-ribosyl)acetamidine + L-glutamate + ADP + phosphate + H(+). It functions in the pathway purine metabolism; IMP biosynthesis via de novo pathway; 5-amino-1-(5-phospho-D-ribosyl)imidazole from N(2)-formyl-N(1)-(5-phospho-D-ribosyl)glycinamide: step 1/2. In terms of biological role, part of the phosphoribosylformylglycinamidine synthase complex involved in the purines biosynthetic pathway. Catalyzes the ATP-dependent conversion of formylglycinamide ribonucleotide (FGAR) and glutamine to yield formylglycinamidine ribonucleotide (FGAM) and glutamate. The FGAM synthase complex is composed of three subunits. PurQ produces an ammonia molecule by converting glutamine to glutamate. PurL transfers the ammonia molecule to FGAR to form FGAM in an ATP-dependent manner. PurS interacts with PurQ and PurL and is thought to assist in the transfer of the ammonia molecule from PurQ to PurL. This Sinorhizobium fredii (strain NBRC 101917 / NGR234) protein is Phosphoribosylformylglycinamidine synthase subunit PurL.